The primary structure comprises 795 residues: Delta-1-pyrroline-5-carboxylate synthase (795 aa).

A glutamate 5-kinase region spans residues 1–361 (MLSQVYRYGF…FFSEVKPAGP (361 aa)). The substrate site is built by serine 117, aspartate 223, and asparagine 246. Residues 266 to 267 (SD) and 305 to 311 (MGGMEAK) each bind ATP. 3 positions are modified to N6-succinyllysine: lysine 311, lysine 347, and lysine 550. Residues 362-795 (TVEQQGEMAR…NLPIPQRNTN (434 aa)) form a gamma-glutamyl phosphate reductase region.

It in the N-terminal section; belongs to the glutamate 5-kinase family. This sequence in the C-terminal section; belongs to the gamma-glutamyl phosphate reductase family. Can form homodimers/multimers.

It is found in the mitochondrion matrix. The catalysed reaction is L-glutamate + ATP = L-glutamyl 5-phosphate + ADP. The enzyme catalyses L-glutamate 5-semialdehyde + phosphate + NADP(+) = L-glutamyl 5-phosphate + NADPH + H(+). Its pathway is amino-acid biosynthesis; L-proline biosynthesis; L-glutamate 5-semialdehyde from L-glutamate: step 1/2. It participates in amino-acid biosynthesis; L-proline biosynthesis; L-glutamate 5-semialdehyde from L-glutamate: step 2/2. Functionally, bifunctional enzyme that converts glutamate to glutamate 5-semialdehyde, an intermediate in the biosynthesis of proline, ornithine and arginine. The sequence is that of Delta-1-pyrroline-5-carboxylate synthase (ALDH18A1) from Pongo abelii (Sumatran orangutan).